Consider the following 395-residue polypeptide: Glyceraldehyde-3-phosphate dehydrogenase, testis-specific (395 aa).

A testis-specific N-terminal extension region spans residues 1–60 (MSKRDIVLTNVTVVQLLRQPCPEPRVEAEPEPPAQPQPQPEPIKEEVPPPPPPPPAPKKV). The segment at 19–59 (QPCPEPRVEAEPEPPAQPQPQPEPIKEEVPPPPPPPPAPKK) is disordered. 2 stretches are compositionally biased toward pro residues: residues 31–41 (EPPAQPQPQPE) and 48–57 (PPPPPPPPAP). NAD(+) contacts are provided by residues 72-73 (RI), Asp-93, and Lys-138. Residues 210-212 (SCT), Thr-241, 270-271 (TG), and Arg-293 contribute to the D-glyceraldehyde 3-phosphate site. Cys-211 acts as the Nucleophile in catalysis. Asn-375 lines the NAD(+) pocket.

This sequence belongs to the glyceraldehyde-3-phosphate dehydrogenase family. Homotetramer.

Its subcellular location is the cytoplasm. It carries out the reaction D-glyceraldehyde 3-phosphate + phosphate + NAD(+) = (2R)-3-phospho-glyceroyl phosphate + NADH + H(+). It functions in the pathway carbohydrate degradation; glycolysis; pyruvate from D-glyceraldehyde 3-phosphate: step 1/5. May play an important role in regulating the switch between different pathways for energy production during spermiogenesis and in the spermatozoon. Required for sperm motility and male fertility. This chain is Glyceraldehyde-3-phosphate dehydrogenase, testis-specific (GAPDHS), found in Bos taurus (Bovine).